The following is a 221-amino-acid chain: Type II secretion system protein J (221 aa).

Residues 1-15 (MWRTNQVSSRQNMAG) constitute a propeptide, leader sequence. An N-methylphenylalanine modification is found at F16. The chain crosses the membrane as a helical span at residues 16 to 36 (FTLIEVLVAIAIFASLSVGAY).

The protein belongs to the GSP J family. As to quaternary structure, type II secretion is composed of four main components: the outer membrane complex, the inner membrane complex, the cytoplasmic secretion ATPase and the periplasm-spanning pseudopilus. Interacts with core component epsG. Post-translationally, cleaved by prepilin peptidase. In terms of processing, methylated by prepilin peptidase at the amino group of the N-terminal phenylalanine once the leader sequence is cleaved by prepilin peptidase.

Its subcellular location is the cell inner membrane. Functionally, component of the type II secretion system required for the energy-dependent secretion of extracellular factors such as proteases and toxins from the periplasm. Part of the pseudopilus tip complex that is critical for the recognition and binding of secretion substrates. The polypeptide is Type II secretion system protein J (epsJ) (Vibrio cholerae serotype O1 (strain ATCC 39315 / El Tor Inaba N16961)).